Consider the following 274-residue polypeptide: Subtilisin DY (274 aa).

Q2 lines the Ca(2+) pocket. In terms of domain architecture, Peptidase S8 spans 5–273; sequence PYGIPLIKAD…KGLINVEAAA (269 aa). D32 acts as the Charge relay system in catalysis. D41 provides a ligand contact to Ca(2+). H63 (charge relay system) is an active-site residue. Ca(2+) contacts are provided by L74, N76, V80, A168, Y170, and V173. The active-site Charge relay system is S220.

This sequence belongs to the peptidase S8 family. The cofactor is Ca(2+).

Its subcellular location is the secreted. It catalyses the reaction Hydrolysis of proteins with broad specificity for peptide bonds, and a preference for a large uncharged residue in P1. Hydrolyzes peptide amides.. Functionally, subtilisin is an extracellular alkaline serine protease, it catalyzes the hydrolysis of proteins and peptide amides. This chain is Subtilisin DY (apr), found in Bacillus licheniformis.